The sequence spans 96 residues: Large ribosomal subunit protein uL23 (96 aa).

The protein belongs to the universal ribosomal protein uL23 family. In terms of assembly, part of the 50S ribosomal subunit. Contacts protein L29, and trigger factor when it is bound to the ribosome.

In terms of biological role, one of the early assembly proteins it binds 23S rRNA. One of the proteins that surrounds the polypeptide exit tunnel on the outside of the ribosome. Forms the main docking site for trigger factor binding to the ribosome. This Ruthia magnifica subsp. Calyptogena magnifica protein is Large ribosomal subunit protein uL23.